A 144-amino-acid chain; its full sequence is Large ribosomal subunit protein uL11 (144 aa).

This sequence belongs to the universal ribosomal protein uL11 family. In terms of assembly, part of the ribosomal stalk of the 50S ribosomal subunit. Interacts with L10 and the large rRNA to form the base of the stalk. L10 forms an elongated spine to which L12 dimers bind in a sequential fashion forming a multimeric L10(L12)X complex. In terms of processing, one or more lysine residues are methylated.

In terms of biological role, forms part of the ribosomal stalk which helps the ribosome interact with GTP-bound translation factors. In Neisseria meningitidis serogroup B (strain ATCC BAA-335 / MC58), this protein is Large ribosomal subunit protein uL11.